Reading from the N-terminus, the 294-residue chain is Beta-lactamase (294 aa).

The N-terminal stretch at 1–27 is a signal peptide; the sequence is MFKKRGRQTVLIAAVLAFFTASSPLLA. Serine 76 acts as the Acyl-ester intermediate in catalysis. Glutamate 174 (proton acceptor) is an active-site residue. 240–242 contributes to the substrate binding site; the sequence is KTG.

It belongs to the class-A beta-lactamase family.

The enzyme catalyses a beta-lactam + H2O = a substituted beta-amino acid. In Citrobacter koseri (Citrobacter diversus), this protein is Beta-lactamase.